We begin with the raw amino-acid sequence, 971 residues long: MEDINLTIFSDDALPHAVVVDDYVIAIKRNPNGTFLEPHQMYDRYTQEFLQGKARDVLRQNGRDGYKLIIPEALSTGIIRYENKTKGAQSEVELENQLRSSIRHQRVKPRMDEAHRKLQIELRGGQILLHPRIAESIEFSIISKENATCSHTPVNCAYEVLLSGGINVGTGTCYDLSSRLKLRVIGDVDRHRRSMQNVLGRVIHTGDPKIINRVNQIGSQQFIDRAIGPDKFELKREIFDRLKALDVDVRKVIREEEASAELDEMGRRWMRDQNVNIVNDIIQSLVKKGSRSEKLAHRNEQGMQARFRRTIATNLRDQRQGKEVLNIRGTRGQPEEKKFAAVLLMTGCDIVERAIWSNEETAILRGLYAYAHDKLGCVYRAMKKDFVWSIRPTYTDRCAGVCDRKRTIMVREDYFDLQREENDSVYKWIITEWDKNDVIISAKNGYLYSKYSGEDEDDILVHEIDDRLYTAMIDRILINGWIEKEGLSQIIKEEVRLESFDFTKDAYVDEAGFLVLPEYYDRVIASNIYDCKFKISRVSITSSSNDDPWDKKTADSIIDEQCLWKIPLPNIIDVRPCFRGDLLTSNSQEYSKRFSGIIDELKKDKEIYDDFIPVQEGVRPCVQGHVCRYAFYRQKLTIFTILKRYYPIERILELTDEEDYEYNLYLDKECYKKESLILNLRSIFSLICFLIDFGYEGREITRGEDEYLKIFNEINYGGHARKEAINKYFPQFYQRLMRVRTSENIEDLLPLAFYQALLLSDPCTDNSEKSSHPLILFCQDKVRVVPIRTATQERGLPLLCCIHIFKFHPGLQMRKKELEDDIKKTLPAIFDYWIELEMKRLDTGDRLRTRAQMVELYYSTNCGGSYETLNFVFPIVHPNKGFIACVISSKGGMGALNEDDVRRRFRRIQSSIQGIFSISIDEEMEIQLHHSGNIQARILEKVFFEHKWHIVQVKLNGKIFENHELITKLMN.

The protein belongs to the orbivirus VP2 family.

Its subcellular location is the virion. The VP2 protein is one of the two proteins (with VP5) which constitute the virus particle outer capsid. It is the major target of the host immunogenic response. The polypeptide is Outer capsid protein VP2 (Segment-2) (Epizootic hemorrhagic disease virus 1 (EHDV-1)).